Here is a 1085-residue protein sequence, read N- to C-terminus: Phosphorylase b kinase regulatory subunit beta (1085 aa).

Ser-10, Ser-19, and Ser-693 each carry phosphoserine. Calmodulin-binding regions lie at residues Arg-760–Ser-787 and Ser-912–Arg-943. Cys-1082 carries S-farnesyl cysteine lipidation.

Belongs to the phosphorylase b kinase regulatory chain family. Hexadecamer of 4 heterotetramers, each composed of alpha, beta, gamma, and delta subunits. Alpha (PHKA1 or PHKA2) and beta (PHKB) are regulatory subunits, gamma (PHKG1 or PHKG2) is the catalytic subunit, and delta is calmodulin. In terms of processing, although the final Cys may be farnesylated, the terminal tripeptide is probably not removed, and the C-terminus is not methylated.

It is found in the cell membrane. Its pathway is glycan biosynthesis; glycogen metabolism. By phosphorylation of various serine residues. Functionally, phosphorylase b kinase catalyzes the phosphorylation of serine in certain substrates, including troponin I. The beta chain acts as a regulatory unit and modulates the activity of the holoenzyme in response to phosphorylation. This Mus musculus (Mouse) protein is Phosphorylase b kinase regulatory subunit beta (Phkb).